The following is a 240-amino-acid chain: Enoyl-CoA delta isomerase 2, peroxisomal (240 aa).

Residues 238–240 carry the Microbody targeting signal motif; that stretch reads PKL.

The protein belongs to the enoyl-CoA hydratase/isomerase family.

Its subcellular location is the peroxisome. The enzyme catalyses a (3Z)-enoyl-CoA = a 4-saturated (2E)-enoyl-CoA. The catalysed reaction is a (3E)-enoyl-CoA = a 4-saturated (2E)-enoyl-CoA. It functions in the pathway lipid metabolism; fatty acid beta-oxidation. Able to isomerize both 3-cis and 3-trans double bonds into the 2-trans form in a range of enoyl-CoA species. Essential for the beta oxidation of unsaturated fatty acids. Involved with IBR1 and IBR3 in the peroxisomal beta-oxidation of indole-3-butyric acid (IBA) to form indole-3-acetic acid (IAA), a biologically active auxin. The sequence is that of Enoyl-CoA delta isomerase 2, peroxisomal from Arabidopsis thaliana (Mouse-ear cress).